The primary structure comprises 88 residues: UPF0297 protein EAT1b_2723 (88 aa).

Belongs to the UPF0297 family.

In Exiguobacterium sp. (strain ATCC BAA-1283 / AT1b), this protein is UPF0297 protein EAT1b_2723.